The sequence spans 136 residues: MFIPKKTKYKKDFKGRISGNAKGGYTLAFGTYGLKSLEPGRLTSKQVESARRSISRTLKRVGKVWIRVFCHTPVSKKPMDVRMGKGKGSIEMWVCKVKPGKILFEISGVSLNLAKEALQKSQAKLPVKCKFISDEL.

The protein belongs to the universal ribosomal protein uL16 family. Part of the 50S ribosomal subunit.

Binds 23S rRNA and is also seen to make contacts with the A and possibly P site tRNAs. This Ehrlichia ruminantium (strain Gardel) protein is Large ribosomal subunit protein uL16.